Here is a 192-residue protein sequence, read N- to C-terminus: Genome polyprotein (192 aa).

Residues R1–N52 lie on the Cytoplasmic side of the membrane. The interval V6–S57 is interaction with APOA2. The tract at residues Y48 to G51 is important for lipid droplets localization. A helical membrane pass occupies residues L53–A73. Positions L62–A75 are cleaved as a propeptide — ER anchor for the core protein, removed in mature form by host signal peptidase. The Lumenal segment spans residues S74 to I192. N80, N93, and N118 each carry an N-linked (GlcNAc...) asparagine; by host glycan. An important for fusion region spans residues L149 to R180. Residue N189 is glycosylated (N-linked (GlcNAc...) asparagine; by host).

It belongs to the hepacivirus polyprotein family. Homooligomer. Interacts with E1 (via C-terminus). Interacts with the non-structural protein 5A. Interacts (via N-terminus) with host STAT1 (via SH2 domain); this interaction results in decreased STAT1 phosphorylation and ubiquitin-mediated proteasome-dependent STAT1 degradation, leading to decreased IFN-stimulated gene transcription. Interacts with host STAT3; this interaction constitutively activates STAT3. Interacts with host LTBR receptor. Interacts with host TNFRSF1A receptor and possibly induces apoptosis. Interacts with host HNRPK. Interacts with host YWHAE. Interacts with host UBE3A/E6AP. Interacts with host DDX3X. Interacts with host APOA2. Interacts with host RXRA protein. Interacts with host SP110 isoform 3/Sp110b; this interaction sequesters the transcriptional corepressor SP110 away from the nucleus. Interacts with host CREB3 nuclear transcription protein; this interaction triggers cell transformation. Interacts with host ACY3. Interacts with host C1QR1. Interacts with host RBM24; this interaction, which enhances the interaction of the mature core protein with 5'-UTR, may inhibit viral translation and favor replication. Interacts with host EIF2AK2/PKR; this interaction induces the autophosphorylation of EIF2AK2. Part of the viral assembly initiation complex composed of NS2, E1, E2, NS3, NS4A, NS5A and the mature core protein. As to quaternary structure, forms a heterodimer with envelope glycoprotein E2. Interacts with mature core protein. Interacts with protease NS2. The heterodimer E1/E2 interacts with host CLDN1; this interaction plays a role in viral entry into host cell. Interacts with host SPSB2 (via C-terminus). Part of the viral assembly initiation complex composed of NS2, E1, E2, NS3, NS4A, NS5A and the mature core protein. Specific enzymatic cleavages in vivo yield mature proteins. The structural proteins, core, E1, E2 and p7 are produced by proteolytic processing by host signal peptidases. The core protein precursor is synthesized as a 23 kDa, which is retained in the ER membrane through the hydrophobic signal peptide. Cleavage by the signal peptidase releases the 21 kDa mature core protein. The cleavage of the core protein precursor occurs between aminoacids 176 and 188 but the exact cleavage site is not known. Some degraded forms of the core protein appear as well during the course of infection. The other proteins (p7, NS2, NS3, NS4A, NS4B, NS5A and NS5B) are cleaved by the viral proteases. Autoprocessing between NS2 and NS3 is mediated by the NS2 cysteine protease catalytic domain and regulated by the NS3 N-terminal domain. Post-translationally, phosphorylated by host PKC and PKA. In terms of processing, ubiquitinated; mediated by UBE3A and leading to core protein subsequent proteasomal degradation. Highly N-glycosylated.

The protein localises to the host endoplasmic reticulum membrane. It is found in the host mitochondrion membrane. It localises to the virion. Its subcellular location is the host cytoplasm. The protein resides in the host nucleus. The protein localises to the host lipid droplet. It is found in the virion membrane. In terms of biological role, packages viral RNA to form a viral nucleocapsid, and promotes virion budding. Participates in the viral particle production as a result of its interaction with the non-structural protein 5A. Binds RNA and may function as a RNA chaperone to induce the RNA structural rearrangements taking place during virus replication. Modulates viral translation initiation by interacting with viral IRES and 40S ribosomal subunit. Affects various cell signaling pathways, host immunity and lipid metabolism. Prevents the establishment of cellular antiviral state by blocking the interferon-alpha/beta (IFN-alpha/beta) and IFN-gamma signaling pathways and by blocking the formation of phosphorylated STAT1 and promoting ubiquitin-mediated proteasome-dependent degradation of STAT1. Activates STAT3 leading to cellular transformation. Regulates the activity of cellular genes, including c-myc and c-fos. May repress the promoter of p53, and sequester CREB3 and SP110 isoform 3/Sp110b in the cytoplasm. Represses cell cycle negative regulating factor CDKN1A, thereby interrupting an important check point of normal cell cycle regulation. Targets transcription factors involved in the regulation of inflammatory responses and in the immune response: suppresses TNF-induced NF-kappa-B activation, and activates AP-1. Binds to dendritic cells (DCs) via C1QR1, resulting in down-regulation of T-lymphocytes proliferation. Alters lipid metabolism by interacting with hepatocellular proteins involved in lipid accumulation and storage. Induces up-regulation of FAS promoter activity, and thereby contributes to the increased triglyceride accumulation in hepatocytes (steatosis). Functionally, forms a heterodimer with envelope glycoprotein E2, which mediates virus attachment to the host cell, virion internalization through clathrin-dependent endocytosis and fusion with host membrane. Fusion with the host cell is most likely mediated by both E1 and E2, through conformational rearrangements of the heterodimer required for fusion rather than a classical class II fusion mechanism. E1/E2 heterodimer binds host apolipoproteins such as APOB and ApoE thereby forming a lipo-viro-particle (LVP). APOE associated to the LVP allows the initial virus attachment to cell surface receptors such as the heparan sulfate proteoglycans (HSPGs), syndecan-1 (SDC1), syndecan-1 (SDC2), the low-density lipoprotein receptor (LDLR) and scavenger receptor class B type I (SCARB1). The cholesterol transfer activity of SCARB1 allows E2 exposure and binding of E2 to SCARB1 and the tetraspanin CD81. E1/E2 heterodimer binding on CD81 activates the epithelial growth factor receptor (EGFR) signaling pathway. Diffusion of the complex E1-E2-EGFR-SCARB1-CD81 to the cell lateral membrane allows further interaction with Claudin 1 (CLDN1) and occludin (OCLN) to finally trigger HCV entry. The protein is Genome polyprotein of Hepatitis C virus (isolate EC1) (HCV).